A 334-amino-acid chain; its full sequence is Serpentine receptor class alpha-11 (334 aa).

The Extracellular segment spans residues 1–23; it reads MTTNNPVCASDAHMEMYSSKLYT. The helical transmembrane segment at 24 to 44 threads the bilayer; it reads SALFLNLIIATTSMILTGFAI. Residues 45–57 lie on the Cytoplasmic side of the membrane; it reads QKLFMESIINIST. Residues 58-80 traverse the membrane as a helical segment; the sequence is RMFLFCGLMCCSLHQTAYIVLRI. The Extracellular segment spans residues 81-105; that stretch reads QVIYQVFFKLSEPCNLYYPAIDCKY. Residues 106–126 traverse the membrane as a helical segment; the sequence is VTFSLVAGNTGMIFIQSAMTI. Topologically, residues 127–145 are cytoplasmic; sequence DRIFATIFPKLWPKLKYWP. Residues 146–166 form a helical membrane-spanning segment; it reads GVVLSILMIACNYANVQIIFW. Residues 167-191 lie on the Extracellular side of the membrane; that stretch reads GDPLTEYVPTCGQFPSKSVNRFQTF. The helical transmembrane segment at 192–212 threads the bilayer; that stretch reads LAIALYMSIAHMVINVIILYI. The Cytoplasmic segment spans residues 213-239; it reads NVLQDRQQSKSFNVNQRYQSREALKSS. Residues 240 to 260 traverse the membrane as a helical segment; that stretch reads QAIFFLSMSQFFACLIYSVFT. The Extracellular portion of the chain corresponds to 261-277; that stretch reads KVFLEFQLNLSPLQSGL. The helical transmembrane segment at 278 to 298 threads the bilayer; it reads VLALSYTTPYACIAIPSLIIF. Residues 299 to 334 are Cytoplasmic-facing; the sequence is TFRFIKNQRLRNINELRSQTETGDECMRKIAKIWEK.

Belongs to the nematode receptor-like protein sra family. In terms of tissue distribution, expressed in interneurons AIY and AVB in L1 larvae. In adults, strong expression is seen in AIY and AIA but only weak expression in AVB.

It localises to the membrane. Its function is as follows. A G protein-coupled receptor required for olfactory imprinting a requisite in ordorant response such as benzaldehyde and isoamylalcohol. The polypeptide is Serpentine receptor class alpha-11 (sra-11) (Caenorhabditis elegans).